The following is a 605-amino-acid chain: DNA mismatch repair protein MutL (605 aa).

The protein belongs to the DNA mismatch repair MutL/HexB family.

In terms of biological role, this protein is involved in the repair of mismatches in DNA. It is required for dam-dependent methyl-directed DNA mismatch repair. May act as a 'molecular matchmaker', a protein that promotes the formation of a stable complex between two or more DNA-binding proteins in an ATP-dependent manner without itself being part of a final effector complex. The sequence is that of DNA mismatch repair protein MutL from Sinorhizobium medicae (strain WSM419) (Ensifer medicae).